Reading from the N-terminus, the 932-residue chain is Chaperone protein ClpC3, chloroplastic (932 aa).

The interval 1–20 (MERTLLNPPPSLRSPACRTT) is disordered. A chloroplast-targeting transit peptide spans 1-48 (MERTLLNPPPSLRSPACRTTTATRIRPSSSMATMIPTPPPMRHARLVK). Residues 99–240 (FDMFTDKAIK…RSEVIRMISD (142 aa)) form the Clp R domain. 2 repeat regions span residues 102–167 (FTDK…AGRG) and 177–240 (FTPA…MISD). The tract at residues 264 to 511 (LLEYGTNLTK…LVRLRNAQLP (248 aa)) is i. 309-316 (GEPGVGKT) serves as a coordination point for ATP. Positions 518-553 (EKKLKKIMAEKSEAIRSQDFEKAGALRGEEVELKSE) constitute a UVR domain. Positions 579-770 (VTEADVQHIV…LIIMTSNVGS (192 aa)) are II. 653-660 (GPTGVGKS) is an ATP binding site.

The protein belongs to the ClpA/ClpB family. ClpC subfamily.

The protein localises to the plastid. It localises to the chloroplast. Functionally, molecular chaperone that may interact with a ClpP-like protease involved in degradation of denatured proteins in the chloroplast. In Oryza sativa subsp. japonica (Rice), this protein is Chaperone protein ClpC3, chloroplastic (CLPC3).